Consider the following 342-residue polypeptide: tRNA (guanine(26)-N(2))-dimethyltransferase (342 aa).

The Trm1 methyltransferase domain occupies 1–336 (MRITEGSAVI…CPYAEVSEIL (336 aa)). Residues Arg35, Arg60, and Glu76 each coordinate S-adenosyl-L-methionine.

The protein belongs to the class I-like SAM-binding methyltransferase superfamily. Trm1 family.

The catalysed reaction is guanosine(26) in tRNA + 2 S-adenosyl-L-methionine = N(2)-dimethylguanosine(26) in tRNA + 2 S-adenosyl-L-homocysteine + 2 H(+). Functionally, dimethylates a single guanine residue at position 26 of a number of tRNAs using S-adenosyl-L-methionine as donor of the methyl groups. The chain is tRNA (guanine(26)-N(2))-dimethyltransferase from Thermoplasma volcanium (strain ATCC 51530 / DSM 4299 / JCM 9571 / NBRC 15438 / GSS1).